A 32-amino-acid chain; its full sequence is Chlorophyll a-b binding protein 2, chloroplastic (32 aa).

Residues glutamate 19 and histidine 22 each contribute to the chlorophyll a site. Arginine 24 provides a ligand contact to chlorophyll b.

The protein belongs to the light-harvesting chlorophyll a/b-binding (LHC) protein family. As to quaternary structure, the LHC complex consists of chlorophyll a-b binding proteins. Requires Binds at least 14 chlorophylls (8 Chl-a and 6 Chl-b) and carotenoids such as lutein and neoxanthin. as cofactor. In terms of processing, photoregulated by reversible phosphorylation of its threonine residues.

It localises to the plastid. The protein localises to the chloroplast thylakoid membrane. In terms of biological role, the light-harvesting complex (LHC) functions as a light receptor, it captures and delivers excitation energy to photosystems with which it is closely associated. This Populus euphratica (Euphrates poplar) protein is Chlorophyll a-b binding protein 2, chloroplastic.